A 176-amino-acid polypeptide reads, in one-letter code: ATP-dependent protease subunit HslV (176 aa).

The active site involves T2. Positions 157, 160, and 163 each coordinate Na(+).

This sequence belongs to the peptidase T1B family. HslV subfamily. A double ring-shaped homohexamer of HslV is capped on each side by a ring-shaped HslU homohexamer. The assembly of the HslU/HslV complex is dependent on binding of ATP.

Its subcellular location is the cytoplasm. The catalysed reaction is ATP-dependent cleavage of peptide bonds with broad specificity.. Allosterically activated by HslU binding. Protease subunit of a proteasome-like degradation complex believed to be a general protein degrading machinery. The chain is ATP-dependent protease subunit HslV from Pseudomonas entomophila (strain L48).